We begin with the raw amino-acid sequence, 327 residues long: Ferrochelatase (327 aa).

2 residues coordinate Fe cation: His-196 and Glu-277.

This sequence belongs to the ferrochelatase family.

The protein resides in the cytoplasm. It carries out the reaction heme b + 2 H(+) = protoporphyrin IX + Fe(2+). It participates in porphyrin-containing compound metabolism; protoheme biosynthesis; protoheme from protoporphyrin-IX: step 1/1. In terms of biological role, catalyzes the ferrous insertion into protoporphyrin IX. This is Ferrochelatase from Gloeobacter violaceus (strain ATCC 29082 / PCC 7421).